A 397-amino-acid chain; its full sequence is Serpin B10 (397 aa).

Positions 74 to 77 (KKRK) match the Nuclear localization signal motif.

The protein belongs to the serpin family. Ov-serpin subfamily.

Its subcellular location is the nucleus. The protein resides in the cytoplasm. Protease inhibitor that may play a role in the regulation of protease activities during hematopoiesis and apoptosis induced by TNF. May regulate protease activities in the cytoplasm and in the nucleus. The polypeptide is Serpin B10 (SERPINB10) (Otolemur garnettii (Small-eared galago)).